An 88-amino-acid chain; its full sequence is Large ribosomal subunit protein bL27 (88 aa).

A disordered region spans residues 1 to 26 (MAHKKGTGSTRNGRDSNSKRLGVKAY).

Belongs to the bacterial ribosomal protein bL27 family.

The chain is Large ribosomal subunit protein bL27 from Prochlorococcus marinus (strain MIT 9211).